We begin with the raw amino-acid sequence, 297 residues long: Small ribosomal subunit protein uS2 (297 aa).

The span at 263-289 shows a compositional bias: low complexity; sequence AAPTSWEADGGDWAASSAAPAGESWAE. The segment at 263–297 is disordered; the sequence is AAPTSWEADGGDWAASSAAPAGESWAETQPAEAKW.

Belongs to the universal ribosomal protein uS2 family. In terms of assembly, component of the small ribosomal subunit. Mature ribosomes consist of a small (40S) and a large (60S) subunit. The 40S subunit contains about 33 different proteins and 1 molecule of RNA (18S). The 60S subunit contains about 49 different proteins and 3 molecules of RNA (25S, 5.8S and 5S). Interacts with rps21.

The protein resides in the cytoplasm. Its function is as follows. Required for the assembly and/or stability of the 40S ribosomal subunit. Required for the processing of the 20S rRNA-precursor to mature 18S rRNA in a late step of the maturation of 40S ribosomal subunits. This Neosartorya fischeri (strain ATCC 1020 / DSM 3700 / CBS 544.65 / FGSC A1164 / JCM 1740 / NRRL 181 / WB 181) (Aspergillus fischerianus) protein is Small ribosomal subunit protein uS2 (rps0).